Reading from the N-terminus, the 256-residue chain is Small ribosomal subunit protein eS1 (256 aa).

Ala2 carries the N-acetylalanine; partial modification.

Belongs to the eukaryotic ribosomal protein eS1 family. Component of the small ribosomal subunit. Mature ribosomes consist of a small (40S) and a large (60S) subunit. The 40S subunit contains about 33 different proteins and 1 molecule of RNA (18S). The 60S subunit contains about 49 different proteins and 3 molecules of RNA (25S, 5.8S and 5S).

It is found in the cytoplasm. In Fusarium vanettenii (strain ATCC MYA-4622 / CBS 123669 / FGSC 9596 / NRRL 45880 / 77-13-4) (Fusarium solani subsp. pisi), this protein is Small ribosomal subunit protein eS1.